The chain runs to 75 residues: Large ribosomal subunit protein bL31 (75 aa).

The protein belongs to the bacterial ribosomal protein bL31 family. Type A subfamily. As to quaternary structure, part of the 50S ribosomal subunit.

In terms of biological role, binds the 23S rRNA. The protein is Large ribosomal subunit protein bL31 of Zymomonas mobilis subsp. mobilis (strain ATCC 31821 / ZM4 / CP4).